A 652-amino-acid polypeptide reads, in one-letter code: DNA ligase (652 aa).

NAD(+) contacts are provided by residues 29–33, 78–79, and E107; these read DSEYD and SL. K109 serves as the catalytic N6-AMP-lysine intermediate. 4 residues coordinate NAD(+): R130, E164, K278, and K302. Zn(2+) contacts are provided by C395, C398, C413, and C418. One can recognise a BRCT domain in the interval 577-652; that stretch reads DQQAALFGLT…IEDEDWLLNL (76 aa).

This sequence belongs to the NAD-dependent DNA ligase family. LigA subfamily. Mg(2+) is required as a cofactor. Requires Mn(2+) as cofactor.

It catalyses the reaction NAD(+) + (deoxyribonucleotide)n-3'-hydroxyl + 5'-phospho-(deoxyribonucleotide)m = (deoxyribonucleotide)n+m + AMP + beta-nicotinamide D-nucleotide.. Functionally, DNA ligase that catalyzes the formation of phosphodiester linkages between 5'-phosphoryl and 3'-hydroxyl groups in double-stranded DNA using NAD as a coenzyme and as the energy source for the reaction. It is essential for DNA replication and repair of damaged DNA. In Streptococcus equi subsp. equi (strain 4047), this protein is DNA ligase.